We begin with the raw amino-acid sequence, 371 residues long: Carbamoyl phosphate synthase small chain (371 aa).

The segment at 1-186 (MDYYNNDTPG…IHQGKTGDVV (186 aa)) is CPSase. L-glutamine is bound by residues Ser52, Gly233, and Gly235. One can recognise a Glutamine amidotransferase type-1 domain in the interval 185-371 (VVVVVDCGIK…KFKKMVVGDA (187 aa)). Cys261 acts as the Nucleophile in catalysis. L-glutamine-binding residues include Leu262, Gln265, Asn303, Gly305, and Tyr306. Catalysis depends on residues His346 and Glu348.

Belongs to the CarA family. As to quaternary structure, composed of two chains; the small (or glutamine) chain promotes the hydrolysis of glutamine to ammonia, which is used by the large (or ammonia) chain to synthesize carbamoyl phosphate. Tetramer of heterodimers (alpha,beta)4.

The catalysed reaction is hydrogencarbonate + L-glutamine + 2 ATP + H2O = carbamoyl phosphate + L-glutamate + 2 ADP + phosphate + 2 H(+). It carries out the reaction L-glutamine + H2O = L-glutamate + NH4(+). Its pathway is amino-acid biosynthesis; L-arginine biosynthesis; carbamoyl phosphate from bicarbonate: step 1/1. The protein operates within pyrimidine metabolism; UMP biosynthesis via de novo pathway; (S)-dihydroorotate from bicarbonate: step 1/3. Functionally, small subunit of the glutamine-dependent carbamoyl phosphate synthetase (CPSase). CPSase catalyzes the formation of carbamoyl phosphate from the ammonia moiety of glutamine, carbonate, and phosphate donated by ATP, constituting the first step of 2 biosynthetic pathways, one leading to arginine and/or urea and the other to pyrimidine nucleotides. The small subunit (glutamine amidotransferase) binds and cleaves glutamine to supply the large subunit with the substrate ammonia. The sequence is that of Carbamoyl phosphate synthase small chain from Sulfolobus acidocaldarius (strain ATCC 33909 / DSM 639 / JCM 8929 / NBRC 15157 / NCIMB 11770).